Reading from the N-terminus, the 208-residue chain is Guanylate kinase (208 aa).

A Guanylate kinase-like domain is found at 3–181 (GSLFIITAAS…ALTELKAIIV (179 aa)). Residue 10 to 17 (AASGTGKT) coordinates ATP.

Belongs to the guanylate kinase family.

The protein localises to the cytoplasm. The catalysed reaction is GMP + ATP = GDP + ADP. Essential for recycling GMP and indirectly, cGMP. This Psychrobacter arcticus (strain DSM 17307 / VKM B-2377 / 273-4) protein is Guanylate kinase.